A 375-amino-acid polypeptide reads, in one-letter code: Putative prophage phiRv2 integrase (375 aa).

A Core-binding (CB) domain is found at 75–153 (APFGEYAEGW…LLRAIMQTAL (79 aa)). The 190-residue stretch at 175-364 (HKIRPATLDE…AKGRDREIAA (190 aa)) folds into the Tyr recombinase domain. Catalysis depends on residues arginine 209, histidine 316, arginine 319, and histidine 342. The active-site O-(3'-phospho-DNA)-tyrosine intermediate is the tyrosine 351.

The protein belongs to the 'phage' integrase family.

Its function is as follows. Integrase is necessary for integration of the phage into the host genome by site-specific recombination. In conjunction with excisionase, integrase is also necessary for excision of the prophage from the host genome. In Mycobacterium tuberculosis (strain CDC 1551 / Oshkosh), this protein is Putative prophage phiRv2 integrase.